The primary structure comprises 553 residues: Putative transport protein KPK_0013 (553 aa).

5 consecutive transmembrane segments (helical) span residues 4 to 24 (IALT…IGNV), 28 to 48 (GVGF…HFVD), 65 to 85 (FGLI…FFAS), 95 to 115 (LFAI…HKLF), and 158 to 178 (MSYA…MWLV). 2 consecutive RCK C-terminal domains span residues 192–276 (RFEE…VIGQ) and 279–361 (ATSL…ELGN). Transmembrane regions (helical) follow at residues 371-391 (MLPV…PLFI), 403-425 (AGGP…LYWF), 437-457 (LGIV…FVAT), 464-484 (LSWI…VGIL), 493-513 (YLTL…LAFA), and 532-552 (PLVM…FWGL).

It belongs to the AAE transporter (TC 2.A.81) family. YidE subfamily.

The protein resides in the cell membrane. The polypeptide is Putative transport protein KPK_0013 (Klebsiella pneumoniae (strain 342)).